Here is a 130-residue protein sequence, read N- to C-terminus: Small ribosomal subunit protein uS9 (130 aa).

It belongs to the universal ribosomal protein uS9 family.

This is Small ribosomal subunit protein uS9 from Shewanella piezotolerans (strain WP3 / JCM 13877).